The primary structure comprises 472 residues: Protein translocase subunit SecD (472 aa).

The next 6 membrane-spanning stretches (helical) occupy residues 7-27, 298-318, 326-345, 349-368, 392-414, and 432-452; these read LLLLIVVLVIGASFVLVKLPL, LVAGFVGLVLVLVFMAVYYRL, SLMIYAVLTLAAFALVGVTL, GIAGFILSIGMAVDANVLIF, AFSSILDSNVTTLIACAALFWFG, and SLFTALTCSRTLLLVIVLSLP.

The protein belongs to the SecD/SecF family. SecD subfamily. As to quaternary structure, forms a complex with SecF. Part of the essential Sec protein translocation apparatus which comprises SecA, SecYEG and auxiliary proteins SecDF. Other proteins may also be involved.

The protein localises to the cell inner membrane. Functionally, part of the Sec protein translocase complex. Interacts with the SecYEG preprotein conducting channel. SecDF uses the proton motive force (PMF) to complete protein translocation after the ATP-dependent function of SecA. Probably participates in protein translocation into and across both the cytoplasmic and thylakoid membranes in cyanobacterial cells. The protein is Protein translocase subunit SecD of Synechocystis sp. (strain ATCC 27184 / PCC 6803 / Kazusa).